A 520-amino-acid polypeptide reads, in one-letter code: Putative tyrosine carboxypeptidase MATCAP2 (520 aa).

A disordered region spans residues 116–153 (EEKKYHSQKQSSSTYSKRCRKPSKSPNTSRSKDPRRMK). His-331 provides a ligand contact to Zn(2+). Glu-332 functions as the Nucleophile in the catalytic mechanism. Zn(2+) contacts are provided by His-336 and Glu-367.

The cofactor is Zn(2+).

Putative tyrosine carboxypeptidase. In Homo sapiens (Human), this protein is Putative tyrosine carboxypeptidase MATCAP2.